The following is a 235-amino-acid chain: Large ribosomal subunit protein uL1 (235 aa).

The protein belongs to the universal ribosomal protein uL1 family. Part of the 50S ribosomal subunit.

In terms of biological role, binds directly to 23S rRNA. The L1 stalk is quite mobile in the ribosome, and is involved in E site tRNA release. Protein L1 is also a translational repressor protein, it controls the translation of the L11 operon by binding to its mRNA. This Prochlorococcus marinus subsp. pastoris (strain CCMP1986 / NIES-2087 / MED4) protein is Large ribosomal subunit protein uL1.